The chain runs to 136 residues: Nucleoside diphosphate kinase (136 aa).

Residues Lys10, Phe58, Arg86, Thr92, Arg104, and Asn114 each contribute to the ATP site. His117 serves as the catalytic Pros-phosphohistidine intermediate.

Belongs to the NDK family. As to quaternary structure, homotetramer. The cofactor is Mg(2+).

The protein resides in the cytoplasm. The enzyme catalyses a 2'-deoxyribonucleoside 5'-diphosphate + ATP = a 2'-deoxyribonucleoside 5'-triphosphate + ADP. The catalysed reaction is a ribonucleoside 5'-diphosphate + ATP = a ribonucleoside 5'-triphosphate + ADP. Major role in the synthesis of nucleoside triphosphates other than ATP. The ATP gamma phosphate is transferred to the NDP beta phosphate via a ping-pong mechanism, using a phosphorylated active-site intermediate. This Corynebacterium glutamicum (strain R) protein is Nucleoside diphosphate kinase.